A 1144-amino-acid polypeptide reads, in one-letter code: Formin-like protein 18 (1144 aa).

The Phosphatase tensin-type domain maps to 17-193 (LEISERVYVF…QYISRRNVGS (177 aa)). The active-site Phosphocysteine intermediate is the Cys126. One can recognise a C2 tensin-type domain in the interval 199–338 (DQALTLDCVN…FSAEVIFSEM (140 aa)). Disordered stretches follow at residues 429–463 (ISENIVSSPDTSSPEKEKDTMSSHKSYADPNSILK) and 482–729 (KIFS…KGRG). The segment covering 441–450 (SPEKEKDTMS) has biased composition (basic and acidic residues). The span at 491-522 (SPVTSPLPNRSPTQGSPASISRFHSSPSSLGI) shows a compositional bias: polar residues. The span at 526 to 536 (LHDHGSCKDEE) shows a compositional bias: basic and acidic residues. Low complexity predominate over residues 538–548 (TSSSPASPSIS). Residues 555–580 (PLTSSQPKKASPQCPQSPTPVHSNGP) show a composition bias toward polar residues. Residues 603 to 613 (RPPPPPPPPPI) show a composition bias toward pro residues. The span at 614–629 (SSLRSTPSPSSTSNSI) shows a compositional bias: low complexity. Residues 633 to 643 (GPPPPPPPPPL) show a composition bias toward pro residues. Over residues 644-653 (QSHRSALSSS) the composition is skewed to low complexity. A compositionally biased stretch (pro residues) spans 669-678 (NPPPPPPPPL). Residues 679 to 695 (HSNSRMGAPTSSLVLKS) show a composition bias toward low complexity. Residues 696 to 705 (PPVPPPPAPA) show a composition bias toward pro residues. An FH2 domain is found at 735 to 1135 (KGQGQTRKAN…RAQKEAENEK (401 aa)).

It belongs to the formin-like family. Class-II subfamily.

The sequence is that of Formin-like protein 18 (FH18) from Arabidopsis thaliana (Mouse-ear cress).